Consider the following 139-residue polypeptide: ATP synthase epsilon chain (139 aa).

The protein belongs to the ATPase epsilon chain family. In terms of assembly, F-type ATPases have 2 components, CF(1) - the catalytic core - and CF(0) - the membrane proton channel. CF(1) has five subunits: alpha(3), beta(3), gamma(1), delta(1), epsilon(1). CF(0) has three main subunits: a, b and c.

The protein resides in the cell inner membrane. Produces ATP from ADP in the presence of a proton gradient across the membrane. The sequence is that of ATP synthase epsilon chain from Pectobacterium carotovorum subsp. carotovorum (strain PC1).